We begin with the raw amino-acid sequence, 245 residues long: Complement C1q subcomponent subunit A (245 aa).

Positions 1-22 are cleaved as a signal peptide; the sequence is METSQGWLVACVLAVTLVWTVA. The Collagen-like domain maps to 31–109; the sequence is GKDGVAGIPG…KGVKGNPGNI (79 aa). Residues 35–111 form a disordered region; the sequence is VAGIPGRPGR…VKGNPGNIRD (77 aa). 2 positions are modified to 4-hydroxyproline: Pro-39 and Pro-45. Lys-48 is subject to 5-hydroxylysine. An O-linked (Gal...) hydroxylysine glycan is attached at Lys-48. At Pro-54 the chain carries 4-hydroxyproline. Lys-67 carries the 5-hydroxylysine modification. Lys-67 carries O-linked (Gal...) hydroxylysine glycosylation. 4-hydroxyproline is present on residues Pro-79 and Pro-85. Lys-100 bears the 5-hydroxylysine mark. Lys-100 carries O-linked (Gal...) hydroxylysine glycosylation. One can recognise a C1q domain in the interval 110-245; sequence RDQPRPAFSA…FSGFLIFPSA (136 aa). Asn-146 carries N-linked (GlcNAc...) asparagine glycosylation. Residues Cys-172 and Cys-190 are joined by a disulfide bond. Position 199 (Gln-199) interacts with Ca(2+).

Core component of the complement C1 complex, a calcium-dependent complex composed of 1 molecule of the C1Q subcomplex, 2 molecules of C1R and 2 molecules of C1S. The C1Q subcomplex is composed 18 subunits: 3 chains of C1QA, C1QB, and C1QC trimerize to form 6 collagen-like triple helices connected to six globular ligand-recognition modules (C1q domain). Interacts with CR1 (via Sushi 24 and Sushi 25 domains). Interacts (via C-terminus) with CD33; this interaction activates CD33 inhibitory motifs. In terms of processing, O-linked glycans are assumed to be the Glc-Gal disaccharides typically found as secondary modifications of hydroxylated lysines in collagen-like domains.

The protein resides in the secreted. It localises to the cell surface. The C1Q subcomplex is inhibited by sulfated molecules, such as triterpenoid sulfates, heparan sulfate, or chondroitin sulfates. Functionally, core component of the complement C1 complex, a multiprotein complex that initiates the classical pathway of the complement system, a cascade of proteins that leads to phagocytosis and breakdown of pathogens and signaling that strengthens the adaptive immune system. The classical complement pathway is initiated by the C1Q subcomplex of the C1 complex, which specifically binds IgG or IgM immunoglobulins complexed with antigens, forming antigen-antibody complexes on the surface of pathogens: C1QA, together with C1QB and C1QC, specifically recognizes and binds the Fc regions of IgG or IgM via its C1q domain. Immunoglobulin-binding activates the proenzyme C1R, which cleaves C1S, initiating the proteolytic cascade of the complement system. The C1Q subcomplex is activated by a hexamer of IgG complexed with antigens, while it is activated by a pentameric IgM. The C1Q subcomplex also recognizes and binds phosphatidylserine exposed on the surface of cells undergoing programmed cell death, possibly promoting activation of the complement system. The chain is Complement C1q subcomponent subunit A from Rattus norvegicus (Rat).